The chain runs to 487 residues: N-succinylglutamate 5-semialdehyde dehydrogenase (487 aa).

Residue 221–226 (GSSDTG) participates in NAD(+) binding. Active-site residues include Glu244 and Cys278.

It belongs to the aldehyde dehydrogenase family. AstD subfamily.

It carries out the reaction N-succinyl-L-glutamate 5-semialdehyde + NAD(+) + H2O = N-succinyl-L-glutamate + NADH + 2 H(+). Its pathway is amino-acid degradation; L-arginine degradation via AST pathway; L-glutamate and succinate from L-arginine: step 4/5. In terms of biological role, catalyzes the NAD-dependent reduction of succinylglutamate semialdehyde into succinylglutamate. This Burkholderia lata (strain ATCC 17760 / DSM 23089 / LMG 22485 / NCIMB 9086 / R18194 / 383) protein is N-succinylglutamate 5-semialdehyde dehydrogenase.